A 520-amino-acid chain; its full sequence is Putative lipase ATG15 (520 aa).

Residues 1-14 (MLHKSPSRKRFASP) lie on the Cytoplasmic side of the membrane. A helical; Signal-anchor for type II membrane protein membrane pass occupies residues 15 to 35 (LHLGCILTLTVLCLIAYYFAL). Over 36–520 (PDYLSVGKSS…WLGFCTKYEL (485 aa)) the chain is Lumenal. N173, N202, and N208 each carry an N-linked (GlcNAc...) asparagine glycan. The Charge relay system role is filled by S332.

This sequence belongs to the AB hydrolase superfamily. Lipase family. In terms of assembly, binds to both phosphatidylinositol (PI) and phosphatidylinositol 3,5-bisphosphate (PIP2).

It is found in the endosome. It localises to the multivesicular body membrane. The protein resides in the prevacuolar compartment membrane. It carries out the reaction a triacylglycerol + H2O = a diacylglycerol + a fatty acid + H(+). Functionally, lipase which is essential for lysis of subvacuolar cytoplasm to vacuole targeted bodies and intravacuolar autophagic bodies. Involved in the lysis of intravacuolar multivesicular body (MVB) vesicles. The intravacuolar membrane disintegration by ATG15 is critical to life span extension. The protein is Putative lipase ATG15 (ATG15) of Saccharomyces cerevisiae (strain YJM789) (Baker's yeast).